The sequence spans 103 residues: UPF0145 protein RSKD131_1772 (103 aa).

The protein belongs to the UPF0145 family.

The protein is UPF0145 protein RSKD131_1772 of Cereibacter sphaeroides (strain KD131 / KCTC 12085) (Rhodobacter sphaeroides).